The sequence spans 613 residues: Ribosome-associated molecular chaperone SSB1 (613 aa).

Residues 1–391 form a nucleotide binding domain (NBD) region; the sequence is MADGVFQGAI…ILTGQSTSDE (391 aa). ATP is bound by residues 16–18, Lys73, 205–207, 271–278, and Gly342; these read TTY, GGT, and ERAKRTLS. Positions 392-402 are inter-domain linker; that stretch reads TKDLLLLDVAP. Residues 403-613 are substrate binding domain (SBD); the sequence is LSLGVGMQGD…RVVTKAMSSR (211 aa). Residues 516-612 form a lid domain (SBDalpha) region; sequence SEDIEKMVNQ…KRVVTKAMSS (97 aa). Positions 574–582 match the Nuclear export signal motif; that stretch reads IEAALADAL.

It belongs to the heat shock protein 70 family. Ssb-type Hsp70 subfamily. Binds to ribosomes. Binds close to the ribosomal tunnel exit via contacts with both ribosomal proteins and rRNA. Directly interacts with nascent polypeptides. This interaction is dependent on the ribosome-associated complex (RAC). Interacts with SSE1. Interacts with FES1.

Its subcellular location is the cytoplasm. The catalysed reaction is ATP + H2O = ADP + phosphate + H(+). Its function is as follows. Ribosome-bound, Hsp70-type chaperone that assists in the cotranslational folding of newly synthesized proteins in the cytosol. Stimulates folding by interacting with nascent chains, binding to short, largely hydrophobic sequences exposed by unfolded proteins, thereby stabilizing longer, more slowly translated, and aggregation-prone nascent polypeptides and domains that cannot fold stably until fully synthesized. The Hsp70-protein substrate interaction depends on ATP-binding and on allosteric regulation between the NBD and the SBD. The ATP-bound state is characterized by a fast exchange rate of substrate (low affinity state), while in the ADP-bound state exchange is much slower (high affinity state). During the Hsp70 cycle, the chaperone switches between the ATP-bound state (open conformation) and the ADP-bound state (closed conformation) by major conformational rearrangements involving mainly the lid domain. Ssb cooperates with a specific Hsp40/Hsp70 co-chaperone termed the ribosome-associated complex (RAC), which stimulates the ATPase activity of the ribosome-associated pool of Ssbs and switches it to the high affinity substrate binding state. Hsp110 chaperone SSE1 and FES1 act as nucleotide exchange factors that cause substrate release. The protein is Ribosome-associated molecular chaperone SSB1 (SSB1) of Nakaseomyces delphensis (Yeast).